Consider the following 858-residue polypeptide: Heat shock protein 105 kDa (858 aa).

Ser-2 is subject to N-acetylserine. Lys-471 is subject to N6-acetyllysine. 2 disordered regions span residues 500–585 (KVPT…PPEA) and 801–858 (VTQP…MDLD). Residues 504–515 (EEEDGSSVEADM) are compositionally biased toward acidic residues. 2 positions are modified to phosphoserine: Ser-509 and Ser-510. Residues 533–555 (QQDNSEAGTQPQVQTDGQQTSQS) are compositionally biased toward polar residues. Ser-558 carries the post-translational modification Phosphoserine. Thr-562 bears the Phosphothreonine mark. Composition is skewed to basic and acidic residues over residues 564–585 (EENKIPDADKANEKKVDQPPEA) and 806–815 (PKIESPKLER). Phosphoserine is present on Ser-810. Thr-816 bears the Phosphothreonine mark.

Belongs to the heat shock protein 70 family. Interacts with HSPA8/HSC70. Interacts with HSPA1A (via NBD) and HSPA1B (via NBD). Phosphorylation on Ser-509 may be important for regulation of the HSPA8/HSC70 chaperone activity.

Its subcellular location is the cytoplasm. Acts as a nucleotide-exchange factor (NEF) for chaperone proteins HSPA1A and HSPA1B, promoting the release of ADP from HSPA1A/B thereby triggering substrate release. Prevents the aggregation of denatured proteins in cells under severe stress, on which the ATP levels decrease markedly. Inhibits HSPA8/HSC70 ATPase and chaperone activities. The protein is Heat shock protein 105 kDa (Hsph1) of Rattus norvegicus (Rat).